The primary structure comprises 625 residues: Voltage-gated potassium channel KCNC4 (625 aa).

2 disordered regions span residues 1-24 and 65-86; these read MISS…SKTC and LADP…SSGS. An inactivation gate region spans residues 1-28; it reads MISSVCVSSYRGRKSGNKPPSKTCLKEE. At 1 to 227 the chain is on the cytoplasmic side; the sequence is MISSVCVSSY…EDPYSSRAAR (227 aa). Ser8, Ser9, Ser15, and Ser21 each carry phosphoserine. Residues 77–86 show a composition bias toward gly residues; that stretch reads DGGGAGSSGS. Zn(2+)-binding residues include His117, Cys123, Cys144, and Cys145. A helical membrane pass occupies residues 228 to 248; it reads VVAFASLFFILVSITTFCLET. 2 N-linked (GlcNAc...) asparagine glycosylation sites follow: Asn257 and Asn266. Residues 279-299 form a helical membrane-spanning segment; it reads EPILTYIEGVCVMWFTLEFLV. Topologically, residues 300–313 are cytoplasmic; sequence RIVCCPDTLDFVKN. A helical transmembrane segment spans residues 314-334; sequence LLNIIDFVAILPFYLEVGLSG. The chain crosses the membrane as a helical; Voltage-sensor span at residues 346-365; sequence FLRVVRFVRILRIFKLTRHF. Topologically, residues 366–381 are cytoplasmic; that stretch reads VGLRVLGHTLRASTNE. The helical transmembrane segment at 382-402 threads the bilayer; the sequence is FLLLIIFLALGVLIFATMIYY. Positions 437, 438, 439, and 440 each coordinate K(+). The Selectivity filter signature appears at 437 to 442; it reads TLGYGD. A helical transmembrane segment spans residues 453–473; the sequence is VGALCALAGVLTIAMPVPVIV. Residues 474-625 are Cytoplasmic-facing; the sequence is NNFGMYYSLA…CVPVSHTCAL (152 aa). A disordered region spans residues 490-581; that stretch reads PKKRKKHVPR…RRALRRSGTR (92 aa). The span at 528–543 shows a compositional bias: basic and acidic residues; the sequence is AREEGMVERKRADSKQ.

Belongs to the potassium channel family. C (Shaw) (TC 1.A.1.2) subfamily. Kv3.4/KCNC4 sub-subfamily. In terms of assembly, homotetramer. Heterotetramer of potassium channel proteins. Post-translationally, phosphorylation of serine residues in the inactivation gate inhibits rapid channel closure.

It localises to the membrane. The enzyme catalyses K(+)(in) = K(+)(out). Voltage-gated potassium channel that opens in response to the voltage difference across the membrane, forming a potassium-selective channel through which potassium ions pass in accordance with their electrochemical gradient. The channel displays rapid activation and inactivation kinetics. The protein is Voltage-gated potassium channel KCNC4 of Rattus norvegicus (Rat).